The following is a 165-amino-acid chain: Coatomer subunit zeta (165 aa).

This sequence belongs to the adaptor complexes small subunit family. In terms of assembly, oligomeric complex that consists of at least the alpha, beta, beta', gamma, delta, epsilon and zeta subunits.

The protein localises to the cytoplasm. The protein resides in the golgi apparatus membrane. Its subcellular location is the cytoplasmic vesicle. It localises to the COPI-coated vesicle membrane. Functionally, the coatomer is a cytosolic protein complex that binds to dilysine motifs and reversibly associates with Golgi non-clathrin-coated vesicles, which further mediate biosynthetic protein transport from the ER, via the Golgi up to the trans Golgi network. Coatomer complex is required for budding from Golgi membranes, and is essential for the retrograde Golgi-to-ER transport of dilysine-tagged proteins. The zeta subunit may be involved in regulating the coat assembly and, hence, the rate of biosynthetic protein transport due to its association-dissociation properties with the coatomer complex. This is Coatomer subunit zeta from Encephalitozoon cuniculi (strain GB-M1) (Microsporidian parasite).